Consider the following 248-residue polypeptide: Ureidoacrylate amidohydrolase RutB (248 aa).

Asp-41 acts as the Proton acceptor in catalysis. Residue Lys-150 is part of the active site. Cys-183 functions as the Nucleophile in the catalytic mechanism.

Belongs to the isochorismatase family. RutB subfamily.

It catalyses the reaction (Z)-3-ureidoacrylate + H2O + H(+) = (Z)-3-aminoacrylate + NH4(+) + CO2. It carries out the reaction (Z)-3-ureidoacrylate + H2O = (Z)-3-aminoacrylate + carbamate + H(+). The catalysed reaction is (Z)-2-methylureidoacrylate + H2O + H(+) = (Z)-2-methylaminoacrylate + NH4(+) + CO2. Its function is as follows. Hydrolyzes ureidoacrylate to form aminoacrylate and carbamate. The carbamate hydrolyzes spontaneously, thereby releasing one of the nitrogen atoms of the pyrimidine ring as ammonia and one of its carbon atoms as CO2. This is Ureidoacrylate amidohydrolase RutB from Methylorubrum extorquens (strain CM4 / NCIMB 13688) (Methylobacterium extorquens).